An 861-amino-acid chain; its full sequence is Leucine--tRNA ligase (861 aa).

The short motif at 42–52 (PYPSGRLHMGH) is the 'HIGH' region element. A 'KMSKS' region motif is present at residues 619 to 623 (KMSKS). Lysine 622 is a binding site for ATP.

This sequence belongs to the class-I aminoacyl-tRNA synthetase family.

The protein resides in the cytoplasm. It catalyses the reaction tRNA(Leu) + L-leucine + ATP = L-leucyl-tRNA(Leu) + AMP + diphosphate. This is Leucine--tRNA ligase from Haemophilus influenzae (strain ATCC 51907 / DSM 11121 / KW20 / Rd).